Reading from the N-terminus, the 159-residue chain is ATP synthase subunit b 2 (159 aa).

Residues 1-21 (MDATFWAFIALVIFVAIVVYM) traverse the membrane as a helical segment.

Belongs to the ATPase B chain family. In terms of assembly, F-type ATPases have 2 components, F(1) - the catalytic core - and F(0) - the membrane proton channel. F(1) has five subunits: alpha(3), beta(3), gamma(1), delta(1), epsilon(1). F(0) has three main subunits: a(1), b(2) and c(10-14). The alpha and beta chains form an alternating ring which encloses part of the gamma chain. F(1) is attached to F(0) by a central stalk formed by the gamma and epsilon chains, while a peripheral stalk is formed by the delta and b chains.

It localises to the cell inner membrane. Functionally, f(1)F(0) ATP synthase produces ATP from ADP in the presence of a proton or sodium gradient. F-type ATPases consist of two structural domains, F(1) containing the extramembraneous catalytic core and F(0) containing the membrane proton channel, linked together by a central stalk and a peripheral stalk. During catalysis, ATP synthesis in the catalytic domain of F(1) is coupled via a rotary mechanism of the central stalk subunits to proton translocation. Component of the F(0) channel, it forms part of the peripheral stalk, linking F(1) to F(0). The sequence is that of ATP synthase subunit b 2 from Brucella ovis (strain ATCC 25840 / 63/290 / NCTC 10512).